A 243-amino-acid chain; its full sequence is Uridine-cytidine kinase B (243 aa).

22–29 contacts ATP; the sequence is GGTASGKT.

It belongs to the uridine kinase family.

The catalysed reaction is uridine + ATP = UMP + ADP + H(+). It carries out the reaction cytidine + ATP = CMP + ADP + H(+). The protein operates within pyrimidine metabolism; CTP biosynthesis via salvage pathway; CTP from cytidine: step 1/3. It participates in pyrimidine metabolism; UMP biosynthesis via salvage pathway; UMP from uridine: step 1/1. Catalyzes the conversion of uridine into uridine monophosphate and cytidine into cytidine monophosphate in the pyrimidine salvage pathway. This is Uridine-cytidine kinase B (udkB) from Dictyostelium discoideum (Social amoeba).